The chain runs to 262 residues: Hemin import ATP-binding protein HmuV (262 aa).

The 242-residue stretch at 3 to 244 (LQARNLTLAR…DHMRRVYGIE (242 aa)) folds into the ABC transporter domain. An ATP-binding site is contributed by 35–42 (GANGAGKS).

This sequence belongs to the ABC transporter superfamily. Heme (hemin) importer (TC 3.A.1.14.5) family. In terms of assembly, the complex is composed of two ATP-binding proteins (HmuV), two transmembrane proteins (HmuU) and a solute-binding protein (HmuT).

Its subcellular location is the cell inner membrane. Its function is as follows. Part of the ABC transporter complex HmuTUV involved in hemin import. Responsible for energy coupling to the transport system. The sequence is that of Hemin import ATP-binding protein HmuV from Bordetella bronchiseptica (strain ATCC BAA-588 / NCTC 13252 / RB50) (Alcaligenes bronchisepticus).